The sequence spans 206 residues: Homoserine/homoserine lactone efflux protein (206 aa).

6 helical membrane passes run 5-25 (WWFA…SGAI), 45-65 (GLQT…GTLF), 68-88 (SLIA…WLGI), 117-137 (FVNL…PQFI), 148-168 (LILG…YATL), and 182-202 (MKAL…LLAS).

It belongs to the Rht family.

The protein resides in the cell membrane. Functionally, conducts the efflux of homoserine and homoserine lactone. The sequence is that of Homoserine/homoserine lactone efflux protein (rhtB) from Salmonella typhi.